We begin with the raw amino-acid sequence, 125 residues long: Phosphoribosyl-AMP cyclohydrolase (125 aa).

Asp86 contributes to the Mg(2+) binding site. A Zn(2+)-binding site is contributed by Cys87. 2 residues coordinate Mg(2+): Asp88 and Asp90. Cys103 and Cys110 together coordinate Zn(2+).

This sequence belongs to the PRA-CH family. In terms of assembly, homodimer. It depends on Mg(2+) as a cofactor. Requires Zn(2+) as cofactor.

Its subcellular location is the cytoplasm. The catalysed reaction is 1-(5-phospho-beta-D-ribosyl)-5'-AMP + H2O = 1-(5-phospho-beta-D-ribosyl)-5-[(5-phospho-beta-D-ribosylamino)methylideneamino]imidazole-4-carboxamide. It functions in the pathway amino-acid biosynthesis; L-histidine biosynthesis; L-histidine from 5-phospho-alpha-D-ribose 1-diphosphate: step 3/9. Catalyzes the hydrolysis of the adenine ring of phosphoribosyl-AMP. The polypeptide is Phosphoribosyl-AMP cyclohydrolase (Erythrobacter litoralis (strain HTCC2594)).